We begin with the raw amino-acid sequence, 132 residues long: MVMTDPIADLLTRVRNANAVKHEVVEVPSSNVKKAITNILLQEGYIKNIEEYNDGVVPMLRISLKYGANNERVITGIKRISKPGLRVYCKKDEVPKVLNGLGVAVISTSKGLVVDREARKDGLGGEVLCYVW.

The protein belongs to the universal ribosomal protein uS8 family. In terms of assembly, part of the 30S ribosomal subunit. Contacts proteins S5 and S12.

In terms of biological role, one of the primary rRNA binding proteins, it binds directly to 16S rRNA central domain where it helps coordinate assembly of the platform of the 30S subunit. This Clostridium botulinum (strain Alaska E43 / Type E3) protein is Small ribosomal subunit protein uS8.